Consider the following 700-residue polypeptide: ATP-dependent zinc metalloprotease FtsH (700 aa).

The Cytoplasmic portion of the chain corresponds to 1–20 (MSSDNGSGRQGGDRGGSTGY). The chain crosses the membrane as a helical span at residues 21-41 (NLLMYLGFGAIIATLVALYVL). At 42-171 (QMFQTSLDYT…FRHADPPGPW (130 aa)) the chain is on the periplasmic side. A helical membrane pass occupies residues 172–192 (EQHSQLIIGMLLAAMLIYIVV). The Cytoplasmic segment spans residues 193 to 700 (RRLSAAGSPM…ITAPATERSG (508 aa)). An ATP-binding site is contributed by 262–269 (GPPGTGKT). His-484 provides a ligand contact to Zn(2+). The active site involves Glu-485. Residues His-488 and Asp-561 each contribute to the Zn(2+) site.

The protein in the central section; belongs to the AAA ATPase family. This sequence in the C-terminal section; belongs to the peptidase M41 family. In terms of assembly, homohexamer. The cofactor is Zn(2+).

The protein resides in the cell inner membrane. In terms of biological role, acts as a processive, ATP-dependent zinc metallopeptidase for both cytoplasmic and membrane proteins. Plays a role in the quality control of integral membrane proteins. In Pirellula staleyi (strain ATCC 27377 / DSM 6068 / ICPB 4128) (Pirella staleyi), this protein is ATP-dependent zinc metalloprotease FtsH.